We begin with the raw amino-acid sequence, 767 residues long: Integrin beta-8 (767 aa).

The first 21 residues, 1–21 (MCGSALAFLTAALLSLHNCQR), serve as a signal peptide directing secretion. Over 22–681 (GPALVLGAAW…SECLSGPSYL (660 aa)) the chain is Extracellular. A PSI domain is found at 46–95 (RCGSANVVSCARCLQLGPECGWCVQEDFVSGGSGSERCDTVSSLISKGCP). 25 cysteine pairs are disulfide-bonded: cysteine 47/cysteine 65, cysteine 55/cysteine 469, cysteine 58/cysteine 83, cysteine 68/cysteine 94, cysteine 211/cysteine 218, cysteine 266/cysteine 307, cysteine 407/cysteine 419, cysteine 439/cysteine 467, cysteine 471/cysteine 490, cysteine 471/cysteine 493, cysteine 481/cysteine 493, cysteine 498/cysteine 527, cysteine 510/cysteine 525, cysteine 519/cysteine 530, cysteine 532/cysteine 545, cysteine 552/cysteine 566, cysteine 560/cysteine 571, cysteine 573/cysteine 582, cysteine 584/cysteine 608, cysteine 592/cysteine 606, cysteine 600/cysteine 611, cysteine 613/cysteine 623, cysteine 626/cysteine 629, cysteine 633/cysteine 660, and cysteine 639/cysteine 656. Positions 146–384 (PVDLYYLVDV…NLVVEAYKKI (239 aa)) constitute a VWFA domain. Mg(2+) is bound by residues aspartate 154 and serine 156. Aspartate 193 contributes to the Ca(2+) binding site. A glycan (N-linked (GlcNAc...) asparagine) is linked at asparagine 233. Asparagine 249, aspartate 251, proline 253, and glutamate 254 together coordinate Ca(2+). Residue glutamate 254 participates in Mg(2+) binding. The N-linked (GlcNAc...) asparagine glycan is linked to asparagine 402. Residues asparagine 421, asparagine 431, and asparagine 456 are each glycosylated (N-linked (GlcNAc...) asparagine). I-EGF domains follow at residues 471–494 (CENH…PQCD), 498–546 (CHFD…QYCE), 547–583 (KDDF…DRCQ), and 584–624 (CPSA…RLCE). Residue asparagine 647 is glycosylated (N-linked (GlcNAc...) asparagine). A helical transmembrane segment spans residues 682 to 702 (RIFFIIFIVTFLIGLLKVLII). Residues 703-767 (RQVILQWNNN…NAQEAFRCNF (65 aa)) lie on the Cytoplasmic side of the membrane.

This sequence belongs to the integrin beta chain family. As to quaternary structure, heterodimer of an alpha and a beta subunit. Beta-8 (ITGB8) associates with alpha-V (ITGAV) to form ITGAV:ITGB8. ITGAV:ITGB8 interacts with TGFB1.

The protein localises to the cell membrane. Integrin alpha-V:beta-8 (ITGAV:ITGB8) is a receptor for fibronectin. It recognizes the sequence R-G-D in its ligands. Integrin alpha-V:beta-6 (ITGAV:ITGB6) mediates R-G-D-dependent release of transforming growth factor beta-1 (TGF-beta-1) from regulatory Latency-associated peptide (LAP), thereby playing a key role in TGF-beta-1 activation on the surface of activated regulatory T-cells (Tregs). Required during vasculogenesis. This chain is Integrin beta-8, found in Mus musculus (Mouse).